The following is a 249-amino-acid chain: Uridylate kinase (249 aa).

21–24 lines the ATP pocket; the sequence is KLSG. Position 63 (Gly-63) interacts with UMP. Positions 64 and 68 each coordinate ATP. UMP is bound by residues Asp-84 and 145-152; that span reads TGNPFVTT. The ATP site is built by Thr-172, Tyr-178, and Asp-181.

It belongs to the UMP kinase family. Homohexamer.

It is found in the cytoplasm. It carries out the reaction UMP + ATP = UDP + ADP. It functions in the pathway pyrimidine metabolism; CTP biosynthesis via de novo pathway; UDP from UMP (UMPK route): step 1/1. Its activity is regulated as follows. Inhibited by UTP. Functionally, catalyzes the reversible phosphorylation of UMP to UDP. This is Uridylate kinase from Francisella tularensis subsp. tularensis (strain FSC 198).